Consider the following 397-residue polypeptide: MVFRTLDDVDVLGKRVLVRVDFNVPMALGKVCDETRLVRHKETLVELQKRGAKLILLSHCGRPKGKIEPEFSLRPVVSVLEKIINQPVAFAPDCIGSTVQVAVEALQNGDVLLLENVRFYAGEEKNDCSFAGALAHNGDLYVNDAFSVSHRAHASVEGITRLLPSYAGRSLQGELQALEKGLGNPTRPVVALVGGAKVSSKLFVLNHLVEKVDTLVIGGGMANSFLAAQGIHVGKSLCEHTLMETVKKIIKKAQECHCTLLLPVDVVVGFRFEKDAPHRLYDIGDIPEEGMILDIGTRSIVHINSVIDKAATLVWNGPLGVFEMPPFDKGTIAVARHAAERSLTGRLVSIAGGGDTVFALNHADVANDFTYLSTAGGAFLEWMEGKVLPGILALMQP.

Residues 21-23, Arg-36, 59-62, Arg-118, and Arg-151 contribute to the substrate site; these read DFN and HCGR. ATP is bound by residues Lys-201, Glu-323, and 353–356; that span reads GGDT.

It belongs to the phosphoglycerate kinase family. Monomer.

The protein resides in the cytoplasm. It carries out the reaction (2R)-3-phosphoglycerate + ATP = (2R)-3-phospho-glyceroyl phosphate + ADP. It participates in carbohydrate degradation; glycolysis; pyruvate from D-glyceraldehyde 3-phosphate: step 2/5. This is Phosphoglycerate kinase from Bartonella tribocorum (strain CIP 105476 / IBS 506).